The sequence spans 725 residues: N-alpha-acetyltransferase 35, NatC auxiliary subunit (725 aa).

Position 187 is a phosphoserine (serine 187). The tract at residues 548 to 573 (ERIMEEQQKGRSSKKTKKKKKVRPLS) is disordered. Basic residues predominate over residues 558–571 (RSSKKTKKKKKVRP).

Belongs to the MAK10 family. As to quaternary structure, component of the N-terminal acetyltransferase C (NatC) complex, which is composed of NAA35, NAA38 and NAA30.

The protein localises to the cytoplasm. Auxillary component of the N-terminal acetyltransferase C (NatC) complex which catalyzes acetylation of N-terminal methionine residues. N-terminal acetylation protects proteins from ubiquitination and degradation by the N-end rule pathway. Involved in regulation of apoptosis and proliferation of smooth muscle cells. This Homo sapiens (Human) protein is N-alpha-acetyltransferase 35, NatC auxiliary subunit (NAA35).